Reading from the N-terminus, the 464-residue chain is Chromosomal replication initiator protein DnaA (464 aa).

A domain I, interacts with DnaA modulators region spans residues 1-90 (MNNDNTEVLE…KYWQDEDQSI (90 aa)). The tract at residues 90-126 (ICSVDICVVSNQDPNLLVDIKDRVDRGIKGNCDNVSS) is domain II. The segment at 127-345 (PLDPRFTFDN…GALNKVVAHS (219 aa)) is domain III, AAA+ region. ATP is bound by residues G173, G175, K176, and T177. The domain IV, binds dsDNA stretch occupies residues 346–464 (SLVGCSITLD…DINLLNRMLR (119 aa)).

It belongs to the DnaA family. In terms of assembly, oligomerizes as a right-handed, spiral filament on DNA at oriC.

It is found in the cytoplasm. In terms of biological role, plays an essential role in the initiation and regulation of chromosomal replication. ATP-DnaA binds to the origin of replication (oriC) to initiate formation of the DNA replication initiation complex once per cell cycle. Binds the DnaA box (a 9 base pair repeat at the origin) and separates the double-stranded (ds)DNA. Forms a right-handed helical filament on oriC DNA; dsDNA binds to the exterior of the filament while single-stranded (ss)DNA is stabiized in the filament's interior. The ATP-DnaA-oriC complex binds and stabilizes one strand of the AT-rich DNA unwinding element (DUE), permitting loading of DNA polymerase. After initiation quickly degrades to an ADP-DnaA complex that is not apt for DNA replication. Binds acidic phospholipids. The sequence is that of Chromosomal replication initiator protein DnaA from Ehrlichia ruminantium (strain Gardel).